Consider the following 419-residue polypeptide: 3-isopropylmalate dehydratase large subunit (419 aa).

The [4Fe-4S] cluster site is built by Cys-300, Cys-360, and Cys-363.

It belongs to the aconitase/IPM isomerase family. LeuC type 2 subfamily. In terms of assembly, heterodimer of LeuC and LeuD. The cofactor is [4Fe-4S] cluster.

The enzyme catalyses (2R,3S)-3-isopropylmalate = (2S)-2-isopropylmalate. Its pathway is amino-acid biosynthesis; L-leucine biosynthesis; L-leucine from 3-methyl-2-oxobutanoate: step 2/4. Functionally, catalyzes the isomerization between 2-isopropylmalate and 3-isopropylmalate, via the formation of 2-isopropylmaleate. The chain is 3-isopropylmalate dehydratase large subunit from Clostridium botulinum (strain Alaska E43 / Type E3).